A 79-amino-acid chain; its full sequence is MKLTCMMIVAVLFLTAWTFVTADDSRNGLEYLFPKAHYEMNPEASKLNKKEDCEAGGRFCGFPKIGEPCCSGWCFFVCA.

The first 22 residues, 1–22 (MKLTCMMIVAVLFLTAWTFVTA), serve as a signal peptide directing secretion. A propeptide spanning residues 23–48 (DDSRNGLEYLFPKAHYEMNPEASKLN) is cleaved from the precursor. Disulfide bonds link C53/C70, C60/C74, and C69/C78.

This sequence belongs to the conotoxin O1 superfamily. In terms of tissue distribution, expressed by the venom duct.

It localises to the secreted. The protein is Conotoxin VnMKLT1-01121 of Conus ventricosus (Mediterranean cone).